We begin with the raw amino-acid sequence, 515 residues long: Alpha-1B adrenergic receptor (515 aa).

Residues M1–A45 are Extracellular-facing. N10, N24, and N34 each carry an N-linked (GlcNAc...) asparagine glycan. Residues I46 to V70 form a helical membrane-spanning segment. Over A71–F83 the chain is Cytoplasmic. Residues I84–L105 form a helical membrane-spanning segment. The Extracellular segment spans residues E106–R115. A helical transmembrane segment spans residues I116–I141. C118 and C195 are disulfide-bonded. The Cytoplasmic portion of the chain corresponds to D142–K161. Residues A162–L182 traverse the membrane as a helical segment. The Extracellular portion of the chain corresponds to G183–P201. The chain crosses the membrane as a helical span at residues F202–C224. Residues R225–T295 are Cytoplasmic-facing. T264 carries the phosphothreonine modification. A helical transmembrane segment spans residues L296–L319. Residues F320–P326 are Extracellular-facing. The helical transmembrane segment at D327–S351 threads the bilayer. The Cytoplasmic segment spans residues S352–F515. C365 carries the S-palmitoyl cysteine lipid modification. The Nuclear localization signal signature appears at R368–R378. 2 disordered regions span residues G392–G430 and L474–F515. Polar residues-rich tracts occupy residues S410–P424 and G484–A498.

This sequence belongs to the G-protein coupled receptor 1 family. Adrenergic receptor subfamily. ADRA1B sub-subfamily. In terms of assembly, homo- and heterooligomer. Heterooligomerizes with ADRA1B homooligomers in cardiac myocytes. Interacts with CAVIN4.

It localises to the nucleus membrane. Its subcellular location is the cell membrane. It is found in the cytoplasm. The protein localises to the membrane. The protein resides in the caveola. In terms of biological role, this alpha-adrenergic receptor mediates its action by association with G proteins that activate a phosphatidylinositol-calcium second messenger system. Its effect is mediated by G(q) and G(11) proteins. Nuclear ADRA1A-ADRA1B heterooligomers regulate phenylephrine (PE)-stimulated ERK signaling in cardiac myocytes. This chain is Alpha-1B adrenergic receptor (Adra1b), found in Rattus norvegicus (Rat).